The sequence spans 329 residues: Acetyl-coenzyme A carboxylase carboxyl transferase subunit alpha (329 aa).

In terms of domain architecture, CoA carboxyltransferase C-terminal spans 40 to 294; sequence QLESLAARRR…RAAIERHLEQ (255 aa).

The protein belongs to the AccA family. Acetyl-CoA carboxylase is a heterohexamer composed of biotin carboxyl carrier protein (AccB), biotin carboxylase (AccC) and two subunits each of ACCase subunit alpha (AccA) and ACCase subunit beta (AccD).

Its subcellular location is the cytoplasm. It carries out the reaction N(6)-carboxybiotinyl-L-lysyl-[protein] + acetyl-CoA = N(6)-biotinyl-L-lysyl-[protein] + malonyl-CoA. It functions in the pathway lipid metabolism; malonyl-CoA biosynthesis; malonyl-CoA from acetyl-CoA: step 1/1. Its function is as follows. Component of the acetyl coenzyme A carboxylase (ACC) complex. First, biotin carboxylase catalyzes the carboxylation of biotin on its carrier protein (BCCP) and then the CO(2) group is transferred by the carboxyltransferase to acetyl-CoA to form malonyl-CoA. The protein is Acetyl-coenzyme A carboxylase carboxyl transferase subunit alpha of Synechococcus sp. (strain CC9605).